A 380-amino-acid chain; its full sequence is Cytochrome b (380 aa).

4 helical membrane-spanning segments follow: residues 34 to 54 (FGSL…LLAT), 78 to 99 (WLIR…YLHI), 114 to 134 (WNTG…GYVL), and 179 to 199 (FFAL…IHLT). Heme b contacts are provided by His-84 and His-98. His-183 and His-197 together coordinate heme b. His-202 is an a ubiquinone binding site. Transmembrane regions (helical) follow at residues 227-247 (LKDI…ALFS), 289-309 (LGGV…PFLH), 321-341 (ISQL…WVGS), and 348-368 (FIII…ILFP).

The protein belongs to the cytochrome b family. As to quaternary structure, the cytochrome bc1 complex contains 11 subunits: 3 respiratory subunits (MT-CYB, CYC1 and UQCRFS1), 2 core proteins (UQCRC1 and UQCRC2) and 6 low-molecular weight proteins (UQCRH/QCR6, UQCRB/QCR7, UQCRQ/QCR8, UQCR10/QCR9, UQCR11/QCR10 and a cleavage product of UQCRFS1). This cytochrome bc1 complex then forms a dimer. The cofactor is heme b.

Its subcellular location is the mitochondrion inner membrane. In terms of biological role, component of the ubiquinol-cytochrome c reductase complex (complex III or cytochrome b-c1 complex) that is part of the mitochondrial respiratory chain. The b-c1 complex mediates electron transfer from ubiquinol to cytochrome c. Contributes to the generation of a proton gradient across the mitochondrial membrane that is then used for ATP synthesis. This chain is Cytochrome b (MT-CYB), found in Pelecanoides magellani (Magellanic diving petrel).